We begin with the raw amino-acid sequence, 267 residues long: Probable aquaporin TIP3-2 (267 aa).

At M1 the chain carries N-acetylmethionine. A2 is subject to N-acetylalanine; in Probable aquaporin TIP3-2, N-terminally processed. Over 2 to 26 the chain is Cytoplasmic; it reads ATSARRAYGFGRADEATHPDSIRAT. Residues 27 to 47 form a helical membrane-spanning segment; it reads LAEFLSTFVFVFAGEGSILAL. Residues 48 to 66 are Vacuolar-facing; that stretch reads DKLYWDTAAHTGTNTPGGL. Residues 67-87 form a helical membrane-spanning segment; the sequence is VLVALAHALALFAAVSAAINV. Residues 88 to 110 lie on the Cytoplasmic side of the membrane; it reads SGGHVNPAVTFAALIGGRISVIR. The NPA 1 signature appears at 93-95; the sequence is NPA. A helical transmembrane segment spans residues 111-131; the sequence is AIYYWVAQLIGAILACLLLRL. Over 132–151 the chain is Vacuolar; it reads ATNGLRPVGFHVASGVSELH. The helical transmembrane segment at 152–172 threads the bilayer; the sequence is GLLMEIILTFALVYVVYSTAI. Over 173-178 the chain is Cytoplasmic; that stretch reads DPKRGS. The chain crosses the membrane as a helical span at residues 179–199; sequence IGIIAPLAIGLIVGANILVGG. Topologically, residues 200 to 226 are vacuolar; the sequence is PFDGASMNPARAFGPALVGWRWSNHWI. The short motif at 207–209 is the NPA 2 element; sequence NPA. A helical transmembrane segment spans residues 227–247; the sequence is YWVGPFIGGALAALIYEYMII. Residues 248 to 267 are Cytoplasmic-facing; it reads PSVNEPPHHSTHQPLAPEDY.

It belongs to the MIP/aquaporin (TC 1.A.8) family. TIP (TC 1.A.8.10) subfamily. In terms of tissue distribution, predominantly expressed in developing seeds. Also expressed in rosette leaves.

The protein localises to the vacuole membrane. Aquaporins facilitate the transport of water and small neutral solutes across cell membranes. The sequence is that of Probable aquaporin TIP3-2 (TIP3-2) from Arabidopsis thaliana (Mouse-ear cress).